Consider the following 181-residue polypeptide: MLLEPGRGCCALAILLAIVDIQSGGCINITSSASQEGTRLNLICTVWHKKEEAEGFVVFLCKDRSGDCSPETSLKQLRLKRDPGIDGVGEISSQLMFTISQVTPLHSGTYQCCARSQKSGIRLQGHFFSILFTETGNYTVTGLKQRQHLEFSHNEGTLSSGFLQEKVWVMLVTSLVALQAL.

Positions 1 to 24 (MLLEPGRGCCALAILLAIVDIQSG) are cleaved as a signal peptide. Residues 25-133 (GCINITSSAS…QGHFFSILFT (109 aa)) enclose the Ig-like V-type domain. N28 is a glycosylation site (N-linked (GlcNAc...) asparagine). Intrachain disulfides connect C44–C112 and C61–C68. A glycan (N-linked (GlcNAc...) asparagine) is linked at N137. S159 carries the GPI-anchor amidated serine lipid modification. The propeptide at 160–181 (SGFLQEKVWVMLVTSLVALQAL) is removed in mature form.

In terms of assembly, homomultimer; disulfide-linked. Interacts with HLA-G. Interacts with HLA-A2-B2M in complex with an HIV-derived peptide. Interacts with TNFRSF14 (via cysteine-rich domain 1); this interaction is direct. Interacts with LCK and CD247/CD3 zeta chain. Expression is restricted to functional NK and cytotoxic T lymphocytes. Expressed in viral-specific effector memory and terminally differentiated effector memory CD8+ T cells. Expressed in memory and activated CD4+ T cell subsets (at protein level). Expressed at high levels in intraepithelial lymphocytes (at protein level). Expressed in both alpha-beta and gamma-delta CD8+ T cell subsets (at protein level). Expressed in umbilical vein endothelial cells (at protein level). Expressed in monocytes and at lower levels in B cells. Isoform 3: Expressed exclusively in activated NK cells (at protein level).

It is found in the cell membrane. Its subcellular location is the secreted. Functionally, receptor on immune cells capable to deliver stimulatory or inhibitory signals that regulate cell activation and differentiation. Exists as a GPI-anchored and as a transmembrane form, each likely initiating distinct signaling pathways via phosphoinositol 3-kinase in activated NK cells and via LCK and CD247/CD3 zeta chain in activated T cells. Receptor for both classical and non-classical MHC class I molecules. In the context of acute viral infection, recognizes HLA-C and triggers NK cell cytotoxic activity, likely playing a role in anti-viral innate immune response. On CD8+ T cells, binds HLA-A2-B2M in complex with a viral peptide and provides a costimulatory signal to activated/memory T cells. Upon persistent antigen stimulation, such as occurs during chronic viral infection, may progressively inhibit TCR signaling in memory CD8+ T cells, contributing to T cell exhaustion. On endothelial cells, recognizes HLA-G and controls angiogenesis in immune privileged sites. Receptor or ligand for TNF superfamily member TNFRSF14, participating in bidirectional cell-cell contact signaling between antigen presenting cells and lymphocytes. Upon ligation of TNFRSF14, provides stimulatory signal to NK cells enhancing IFNG production and anti-tumor immune response. On activated CD4+ T cells, interacts with TNFRSF14 and down-regulates CD28 costimulatory signaling, restricting memory and alloantigen-specific immune response. In the context of bacterial infection, acts as a ligand for TNFRSF14 on epithelial cells, triggering the production of antimicrobial proteins and pro-inflammatory cytokines. The soluble GPI-cleaved form, usually released by activated lymphocytes, might play an immune regulatory role by limiting lymphocyte effector functions. This chain is CD160 antigen, found in Homo sapiens (Human).